The chain runs to 147 residues: Small ribosomal subunit protein uS5 (147 aa).

Positions 9 to 72 (FEEVIVDIGR…DDAFKNIIHV (64 aa)) constitute an S5 DRBM domain.

The protein belongs to the universal ribosomal protein uS5 family. Part of the 30S ribosomal subunit. Contacts proteins S4 and S8.

Its function is as follows. With S4 and S12 plays an important role in translational accuracy. In terms of biological role, located at the back of the 30S subunit body where it stabilizes the conformation of the head with respect to the body. The chain is Small ribosomal subunit protein uS5 from Campylobacter concisus (strain 13826).